The following is a 729-amino-acid chain: uncharacterized protein (729 aa).

This is an uncharacterized protein from Caenorhabditis elegans.